The chain runs to 141 residues: Large ribosomal subunit protein uL11 (141 aa).

Belongs to the universal ribosomal protein uL11 family. In terms of assembly, part of the ribosomal stalk of the 50S ribosomal subunit. Interacts with L10 and the large rRNA to form the base of the stalk. L10 forms an elongated spine to which L12 dimers bind in a sequential fashion forming a multimeric L10(L12)X complex. In terms of processing, one or more lysine residues are methylated.

In terms of biological role, forms part of the ribosomal stalk which helps the ribosome interact with GTP-bound translation factors. This is Large ribosomal subunit protein uL11 from Natranaerobius thermophilus (strain ATCC BAA-1301 / DSM 18059 / JW/NM-WN-LF).